A 201-amino-acid polypeptide reads, in one-letter code: Inner membrane protein YnbA (201 aa).

The Periplasmic portion of the chain corresponds to 1 to 43 (MTLYQIKPLFQSLLRPTMFWLYKHHVTANHITLAALALSLLTG). Residues 44 to 64 (LLLMLAAQPILFLLLPIVLFI) traverse the membrane as a helical segment. The Cytoplasmic segment spans residues 65–84 (RMALNALDGMLARECNQQTR). A helical membrane pass occupies residues 85–107 (LGAILNETGDVISDIALYLPFLF). Over 108-116 (LPESNASLV) the chain is Periplasmic. Residues 117 to 139 (ILMLFCTILTEFCGLLAQTINGV) traverse the membrane as a helical segment. Over 140–151 (RSYAGPFGKSDR) the chain is Cytoplasmic. A helical membrane pass occupies residues 152–172 (ALIFGLWGLAVAIYPQWMQWN). At 173–175 (NLL) the chain is on the periplasmic side. Residues 176-196 (WSIASILLLWTAINRCRSVLL) form a helical membrane-spanning segment. Residues 197–201 (MSAEI) are Cytoplasmic-facing.

It localises to the cell inner membrane. The sequence is that of Inner membrane protein YnbA (ynbA) from Escherichia coli (strain K12).